Here is a 188-residue protein sequence, read N- to C-terminus: UPF0301 protein Mmwyl1_0539 (188 aa).

The protein belongs to the UPF0301 (AlgH) family.

The sequence is that of UPF0301 protein Mmwyl1_0539 from Marinomonas sp. (strain MWYL1).